The sequence spans 1374 residues: DNA-directed RNA polymerase subunit beta (1374 aa).

The protein belongs to the RNA polymerase beta chain family. As to quaternary structure, the RNAP catalytic core consists of 2 alpha, 1 beta, 1 beta' and 1 omega subunit. When a sigma factor is associated with the core the holoenzyme is formed, which can initiate transcription.

The catalysed reaction is RNA(n) + a ribonucleoside 5'-triphosphate = RNA(n+1) + diphosphate. Its function is as follows. DNA-dependent RNA polymerase catalyzes the transcription of DNA into RNA using the four ribonucleoside triphosphates as substrates. This chain is DNA-directed RNA polymerase subunit beta, found in Methylobacterium nodulans (strain LMG 21967 / CNCM I-2342 / ORS 2060).